The following is a 425-amino-acid chain: Glutamate-1-semialdehyde 2,1-aminomutase (425 aa).

The residue at position 265 (lysine 265) is an N6-(pyridoxal phosphate)lysine.

Belongs to the class-III pyridoxal-phosphate-dependent aminotransferase family. HemL subfamily. In terms of assembly, homodimer. Pyridoxal 5'-phosphate is required as a cofactor.

The protein localises to the cytoplasm. The enzyme catalyses (S)-4-amino-5-oxopentanoate = 5-aminolevulinate. It participates in porphyrin-containing compound metabolism; protoporphyrin-IX biosynthesis; 5-aminolevulinate from L-glutamyl-tRNA(Glu): step 2/2. The protein is Glutamate-1-semialdehyde 2,1-aminomutase of Opitutus terrae (strain DSM 11246 / JCM 15787 / PB90-1).